Reading from the N-terminus, the 34-residue chain is Antimicrobial peptide Alo-2 (34 aa).

Disulfide bonds link cysteine 1/cysteine 18, cysteine 8/cysteine 22, and cysteine 17/cysteine 33.

The protein localises to the secreted. Functionally, has antifungal activity against C.glabrata. The sequence is that of Antimicrobial peptide Alo-2 from Acrocinus longimanus (Giant harlequin beetle).